An 89-amino-acid polypeptide reads, in one-letter code: YcgL domain-containing protein Asuc_1390 (89 aa).

The region spanning 1 to 85 is the YcgL domain; the sequence is MLCAIYKSKK…KDDWLFTIEK (85 aa).

This chain is YcgL domain-containing protein Asuc_1390, found in Actinobacillus succinogenes (strain ATCC 55618 / DSM 22257 / CCUG 43843 / 130Z).